Consider the following 143-residue polypeptide: Peptide methionine sulfoxide reductase MsrB (143 aa).

Positions 16 to 139 (DAELRRRLTP…NSAALNFEAK (124 aa)) constitute a MsrB domain. The Zn(2+) site is built by cysteine 55, cysteine 58, cysteine 104, and cysteine 107. The Nucleophile role is filled by cysteine 128.

Belongs to the MsrB Met sulfoxide reductase family. Requires Zn(2+) as cofactor.

It catalyses the reaction L-methionyl-[protein] + [thioredoxin]-disulfide + H2O = L-methionyl-(R)-S-oxide-[protein] + [thioredoxin]-dithiol. In Burkholderia mallei (strain NCTC 10229), this protein is Peptide methionine sulfoxide reductase MsrB.